A 239-amino-acid polypeptide reads, in one-letter code: Fumarate reductase iron-sulfur subunit (239 aa).

The 91-residue stretch at 5–95 folds into the 2Fe-2S ferredoxin-type domain; that stretch reads LTIRVFKYDP…DGVITLLPLP (91 aa). Positions 57, 62, 65, and 77 each coordinate [2Fe-2S] cluster. A 4Fe-4S ferredoxin-type domain is found at 142 to 171; it reads AQEVFELDRCIECGCCIAACGTKIMREDFV. Positions 151, 154, and 157 each coordinate [4Fe-4S] cluster. [3Fe-4S] cluster-binding residues include cysteine 161, cysteine 208, and cysteine 214. Cysteine 218 contacts [4Fe-4S] cluster.

This sequence belongs to the succinate dehydrogenase/fumarate reductase iron-sulfur protein family. Part of an enzyme complex containing three subunits: a flavoprotein (frdA), an iron-sulfur protein (frdB), and diheme cytochrome b (frdC). It depends on [2Fe-2S] cluster as a cofactor. The cofactor is [3Fe-4S] cluster. [4Fe-4S] cluster is required as a cofactor.

The protein localises to the cell inner membrane. The enzyme catalyses a menaquinone + succinate = a menaquinol + fumarate. Its function is as follows. The fumarate reductase enzyme complex is required for fumarate respiration using formate or sulfide as electron donor. The chain is Fumarate reductase iron-sulfur subunit (frdB) from Wolinella succinogenes (strain ATCC 29543 / DSM 1740 / CCUG 13145 / JCM 31913 / LMG 7466 / NCTC 11488 / FDC 602W) (Vibrio succinogenes).